Reading from the N-terminus, the 461-residue chain is tRNA modification GTPase MnmE (461 aa).

Residues R23, E88, and R127 each contribute to the (6S)-5-formyl-5,6,7,8-tetrahydrofolate site. Residues 223–382 enclose the TrmE-type G domain; the sequence is GLSTVIVGKP…IEDALAEMVY (160 aa). A K(+)-binding site is contributed by N233. GTP-binding positions include 233–238, 252–258, and 277–280; these read NVGKSS, TDVPGTT, and DTAG. S237 contacts Mg(2+). T252, V254, and T257 together coordinate K(+). T258 lines the Mg(2+) pocket. K461 is a (6S)-5-formyl-5,6,7,8-tetrahydrofolate binding site.

This sequence belongs to the TRAFAC class TrmE-Era-EngA-EngB-Septin-like GTPase superfamily. TrmE GTPase family. Homodimer. Heterotetramer of two MnmE and two MnmG subunits. K(+) serves as cofactor.

It is found in the cytoplasm. In terms of biological role, exhibits a very high intrinsic GTPase hydrolysis rate. Involved in the addition of a carboxymethylaminomethyl (cmnm) group at the wobble position (U34) of certain tRNAs, forming tRNA-cmnm(5)s(2)U34. This chain is tRNA modification GTPase MnmE, found in Alkaliphilus oremlandii (strain OhILAs) (Clostridium oremlandii (strain OhILAs)).